Reading from the N-terminus, the 643-residue chain is Transducer protein Htr8 (643 aa).

5 helical membrane passes run 48-68, 79-99, 115-134, 149-169, and 184-204; these read VFVL…GTES, PGIL…LASI, VLAS…EAHF, WLPF…FGMI, and PWVW…ALMA. The 54-residue stretch at 273-326 folds into the HAMP domain; that stretch reads ERLEATANTYGAAMARAADGDLSVRLDPDVENDAMAAIAASFNEMLDETETTIR. The region spanning 345-581 is the Methyl-accepting transducer domain; that stretch reads GVVEIEDASG…EAVSMIAEVS (237 aa).

The protein belongs to the methyl-accepting chemotaxis (MCP) protein family. Post-translationally, methylated by CheR.

Its subcellular location is the cell membrane. In terms of biological role, potentially involved in chemo- or phototactic signal transduction. The sequence is that of Transducer protein Htr8 (htr8) from Halobacterium salinarum (strain ATCC 29341 / DSM 671 / R1).